Reading from the N-terminus, the 489-residue chain is Cytochrome P450 2C70 (489 aa).

An N-terminal signal peptide occupies residues 1 to 27; the sequence is MALFIFLGIWLSCLVFLFLWNQHHVRR. C434 contacts heme.

The protein belongs to the cytochrome P450 family. Heme serves as cofactor.

The protein resides in the endoplasmic reticulum membrane. It is found in the microsome membrane. It catalyses the reaction chenodeoxycholate + reduced [NADPH--hemoprotein reductase] + O2 = alpha-muricholate + oxidized [NADPH--hemoprotein reductase] + H2O + H(+). The enzyme catalyses ursodeoxycholate + reduced [NADPH--hemoprotein reductase] + O2 = beta-muricholate + oxidized [NADPH--hemoprotein reductase] + H2O + H(+). Functionally, a cytochrome P450 monooxygenase involved in muricholic acid (MCA) synthesis. Hydroxylates at the 6-beta position two major bile acids, chenodeoxycholic acid (CDCA) and ursodeoxycholic acid (UDCA) to form alpha-MCA and beta-MCA, respectively. May regulate NR1H4/farnesoid X receptor signaling, as taurine-conjugated MCAs are antagonists of NR1H4. Mechanistically, uses molecular oxygen inserting one oxygen atom into a substrate, and reducing the second into a water molecule, with two electrons provided by NADPH via cytochrome P450 reductase (CPR; NADPH-ferrihemoprotein reductase). This Rattus norvegicus (Rat) protein is Cytochrome P450 2C70.